A 146-amino-acid polypeptide reads, in one-letter code: Large ribosomal subunit protein uL15 (146 aa).

Basic and acidic residues predominate over residues 1 to 13; the sequence is MKLHELKAAEGSR. The disordered stretch occupies residues 1–56; the sequence is MKLHELKAAEGSRRVRNRVGRGAATGNGKTSGRGQKGQKARSGGKLRPGFEGGQLP. The segment covering 23-35 has biased composition (gly residues); the sequence is AATGNGKTSGRGQ.

Belongs to the universal ribosomal protein uL15 family. As to quaternary structure, part of the 50S ribosomal subunit.

Functionally, binds to the 23S rRNA. This Staphylococcus epidermidis (strain ATCC 35984 / DSM 28319 / BCRC 17069 / CCUG 31568 / BM 3577 / RP62A) protein is Large ribosomal subunit protein uL15.